We begin with the raw amino-acid sequence, 503 residues long: TGF-beta receptor type-1 (503 aa).

A signal peptide spans 1–33 (MEAAVAAPRPRLLLLVLAAAAAAAAALLPGATA). Topologically, residues 34–126 (LQCFCHLCTK…SSPGLGPVEL (93 aa)) are extracellular. 5 disulfides stabilise this stretch: C36/C54, C38/C41, C48/C71, C86/C100, and C101/C106. N45 carries N-linked (GlcNAc...) asparagine glycosylation. A helical membrane pass occupies residues 127 to 147 (AAVIAGPVCFVCISLMLMVYI). The Cytoplasmic portion of the chain corresponds to 148 to 503 (CHNRTVIHHR…QLSQQEGIKM (356 aa)). Residue S165 is modified to Phosphoserine. The region spanning 175–204 (TTLKDLIYDMTTSGSGSGLPLLVQRTIART) is the GS domain. Phosphothreonine; by TGFBR2 occurs at positions 185 and 186. Phosphoserine; by TGFBR2 is present on residues S187, S189, and S191. Positions 193 to 194 (LP) match the FKBP1A-binding motif. In terms of domain architecture, Protein kinase spans 205-495 (IVLQESIGKG…LRIKKTLSQL (291 aa)). ATP contacts are provided by residues 211-219 (IGKGRFGEV) and K232. A Glycyl lysine isopeptide (Lys-Gly) (interchain with G-Cter in ubiquitin) cross-link involves residue K268. Catalysis depends on D333, which acts as the Proton acceptor. K391 participates in a covalent cross-link: Glycyl lysine isopeptide (Lys-Gly) (interchain with G-Cter in SUMO).

It belongs to the protein kinase superfamily. TKL Ser/Thr protein kinase family. TGFB receptor subfamily. In terms of assembly, homodimer; in the endoplasmic reticulum but also at the cell membrane. Heterohexamer; TGFB1, TGFB2 and TGFB3 homodimeric ligands assemble a functional receptor composed of two TGFBR1 and TGFBR2 heterodimers to form a ligand-receptor heterohexamer. The respective affinity of TGBRB1 and TGFBR2 for the ligands may modulate the kinetics of assembly of the receptor and may explain the different biological activities of TGFB1, TGFB2 and TGFB3. Component of a complex composed of TSC22D1 (via N-terminus), TGFBR1 and TGFBR2; the interaction between TSC22D1 and TGFBR1 is inhibited by SMAD7 and promoted by TGFB1. Interacts with CD109; inhibits TGF-beta receptor activation in keratinocytes. Interacts with RBPMS. Interacts (unphosphorylated) with FKBP1A; prevents TGFBR1 phosphorylation by TGFBR2 and stabilizes it in the inactive conformation. Interacts with SMAD2, SMAD3 and ZFYVE9; ZFYVE9 recruits SMAD2 and SMAD3 to the TGF-beta receptor. Interacts with TRAF6 and MAP3K7; induces MAP3K7 activation by TRAF6. Interacts with PARD6A; involved in TGF-beta induced epithelial to mesenchymal transition. Interacts with NEDD4L. Interacts with SMAD7, SMURF1 and SMURF2; SMAD7 recruits NEDD4L, SMURF1 and SMURF2 to the TGF-beta receptor. Interacts with USP15 and VPS39. Interacts with SDCBP (via C-terminus). Interacts with CAV1 and this interaction is impaired in the presence of SDCBP. Interacts with APPL1; interaction is TGF beta dependent; mediates trafficking of the TGFBR1 from the endosomes to the nucleus via microtubules in a TRAF6-dependent manner. Interacts with GPR50; this interaction promotes the constitutive activation of SMAD signaling pathway. The cofactor is Mg(2+). Requires Mn(2+) as cofactor. In terms of processing, phosphorylated at basal levels in the absence of ligand. Activated upon phosphorylation by TGFBR2, mainly in the GS domain. Phosphorylation in the GS domain abrogates FKBP1A-binding. Post-translationally, N-Glycosylated. Ubiquitinated; undergoes ubiquitination catalyzed by several E3 ubiquitin ligases including SMURF1, SMURF2 and NEDD4L2. Results in the proteasomal and/or lysosomal degradation of the receptor thereby negatively regulating its activity. Deubiquitinated by USP15, leading to stabilization of the protein and enhanced TGF-beta signal. Its ubiquitination and proteasome-mediated degradation is negatively regulated by SDCBP. Ubiquitinated by BFAR via'Lys-63'-linked ubiquitination at Lys-268, leading to TGF-beta signaling activation. Found in all tissues examined, most abundant in placenta and least abundant in brain and heart. Expressed in a variety of cancer cell lines.

Its subcellular location is the cell membrane. The protein localises to the cell junction. The protein resides in the tight junction. It localises to the cell surface. It is found in the membrane raft. It catalyses the reaction L-threonyl-[receptor-protein] + ATP = O-phospho-L-threonyl-[receptor-protein] + ADP + H(+). The catalysed reaction is L-seryl-[receptor-protein] + ATP = O-phospho-L-seryl-[receptor-protein] + ADP + H(+). Its activity is regulated as follows. Kept in an inactive conformation by FKBP1A preventing receptor activation in absence of ligand. CD109 is another inhibitor of the receptor. Transmembrane serine/threonine kinase forming with the TGF-beta type II serine/threonine kinase receptor, TGFBR2, the non-promiscuous receptor for the TGF-beta cytokines TGFB1, TGFB2 and TGFB3. Transduces the TGFB1, TGFB2 and TGFB3 signal from the cell surface to the cytoplasm and is thus regulating a plethora of physiological and pathological processes including cell cycle arrest in epithelial and hematopoietic cells, control of mesenchymal cell proliferation and differentiation, wound healing, extracellular matrix production, immunosuppression and carcinogenesis. The formation of the receptor complex composed of 2 TGFBR1 and 2 TGFBR2 molecules symmetrically bound to the cytokine dimer results in the phosphorylation and the activation of TGFBR1 by the constitutively active TGFBR2. Activated TGFBR1 phosphorylates SMAD2 which dissociates from the receptor and interacts with SMAD4. The SMAD2-SMAD4 complex is subsequently translocated to the nucleus where it modulates the transcription of the TGF-beta-regulated genes. This constitutes the canonical SMAD-dependent TGF-beta signaling cascade. Also involved in non-canonical, SMAD-independent TGF-beta signaling pathways. For instance, TGFBR1 induces TRAF6 autoubiquitination which in turn results in MAP3K7 ubiquitination and activation to trigger apoptosis. Also regulates epithelial to mesenchymal transition through a SMAD-independent signaling pathway through PARD6A phosphorylation and activation. The protein is TGF-beta receptor type-1 (TGFBR1) of Homo sapiens (Human).